The following is a 165-amino-acid chain: Large ribosomal subunit protein uL11 (165 aa).

Arg-67 is subject to N5-methylarginine.

It belongs to the universal ribosomal protein uL11 family. Component of the large ribosomal subunit (LSU). Mature N.crassa ribosomes consist of a small (40S) and a large (60S) subunit. The 40S small subunit contains 1 molecule of ribosomal RNA (18S rRNA) and at least 32 different proteins. The large 60S subunit contains 3 rRNA molecules (26S, 5.8S and 5S rRNA) and at least 42 different proteins.

The protein localises to the cytoplasm. In terms of biological role, component of the ribosome, a large ribonucleoprotein complex responsible for the synthesis of proteins in the cell. The small ribosomal subunit (SSU) binds messenger RNAs (mRNAs) and translates the encoded message by selecting cognate aminoacyl-transfer RNA (tRNA) molecules. The large subunit (LSU) contains the ribosomal catalytic site termed the peptidyl transferase center (PTC), which catalyzes the formation of peptide bonds, thereby polymerizing the amino acids delivered by tRNAs into a polypeptide chain. The nascent polypeptides leave the ribosome through a tunnel in the LSU and interact with protein factors that function in enzymatic processing, targeting, and the membrane insertion of nascent chains at the exit of the ribosomal tunnel. This chain is Large ribosomal subunit protein uL11 (rpl-12), found in Neurospora crassa (strain ATCC 24698 / 74-OR23-1A / CBS 708.71 / DSM 1257 / FGSC 987).